Consider the following 339-residue polypeptide: Fructose-1,6-bisphosphatase isozyme 2 (339 aa).

The tract at residues 3-10 (DRSPFETD) is important for interaction with ALDOA. Residues valine 18 and 28–32 (TGELT) contribute to the AMP site. The Mg(2+) site is built by aspartate 69 and glutamate 98. 113-114 (KY) is an AMP binding site. The Mg(2+) site is built by aspartate 119, leucine 121, and aspartate 122. Aspartate 122 is a substrate binding site. An AMP-binding site is contributed by arginine 141. The short motif at 204 to 208 (KKKGK) is the Nuclear localization signal element. 213-216 (NEGY) provides a ligand contact to substrate. Residues tyrosine 216 and tyrosine 219 each carry the phosphotyrosine modification. Substrate contacts are provided by residues 245–249 (YVGSM), tyrosine 265, and lysine 275. Residue glutamate 281 participates in Mg(2+) binding.

The protein belongs to the FBPase class 1 family. In terms of assembly, homotetramer. Interacts with ALDOA; the interaction blocks inhibition by physiological concentrations of AMP and reduces inhibition by Ca(2+). Interacts with alpha-actinin and F-actin. Mg(2+) serves as cofactor.

It localises to the cell junction. Its subcellular location is the cytoplasm. The protein resides in the nucleus. It is found in the myofibril. The protein localises to the sarcomere. It localises to the z line. It catalyses the reaction beta-D-fructose 1,6-bisphosphate + H2O = beta-D-fructose 6-phosphate + phosphate. It functions in the pathway carbohydrate biosynthesis; gluconeogenesis. With respect to regulation, subject to complex allosteric regulation. The enzyme can assume an active R-state, or an inactive T-state. Intermediate conformations may exist. AMP acts as an allosteric inhibitor. Fructose 2,6-bisphosphate acts as a competitive inhibitor. Strongly inhibited by Ca(2+). Functionally, catalyzes the hydrolysis of fructose 1,6-bisphosphate to fructose 6-phosphate in the presence of divalent cations and probably participates in glycogen synthesis from carbohydrate precursors, such as lactate. In Rattus norvegicus (Rat), this protein is Fructose-1,6-bisphosphatase isozyme 2 (Fbp2).